A 348-amino-acid chain; its full sequence is Ethanol acetyltransferase 2 (348 aa).

The transit peptide at 1–19 (MIFNSLSIKRLSSTXTSLP) directs the protein to the mitochondrion. The AB hydrolase-1 domain occupies 49–305 (IIFLHGIYGY…VMKERPQEYI (257 aa)). Active-site charge relay system residues include Ser121, Asp145, and His294.

It belongs to the AB hydrolase superfamily.

The protein resides in the mitochondrion. It carries out the reaction ethanol + acetyl-CoA = ethyl acetate + CoA. It catalyses the reaction acetyl-CoA + H2O = acetate + CoA + H(+). The enzyme catalyses ethyl acetate + H2O = ethanol + acetate + H(+). Its function is as follows. Alcohol acetyltransferase that catalyzes the synthesis of ethyl acetate from ethanol and acetyl-CoA. Can also function as a thioesterase by hydrolyzing acetyl-CoA in the absence of ethanol, as well as esterase hydrolyzing ethyl acetate. The protein is Ethanol acetyltransferase 2 (EAT2) of Hanseniaspora uvarum (Yeast).